The sequence spans 431 residues: REST corepressor 1 (431 aa).

A compositionally biased stretch (basic and acidic residues) spans 1-10 (MIEKGAEISG). The tract at residues 1-53 (MIEKGAEISGKRRGRNNAANSKSLGTNVNGSNSWEEGSSSSSSDDEPGGGGMR) is disordered. Polar residues predominate over residues 17-28 (NAANSKSLGTNV). A compositionally biased stretch (low complexity) spans 29 to 42 (NGSNSWEEGSSSSS). One can recognise an ELM2 domain in the interval 50–135 (GGMRVGLQYQ…KSLADLLNFT (86 aa)). The SANT 1 domain occupies 136–187 (PFPDEWTVEDRVLFEQAFSFHGKTFHRIQQMLPDKSIASLVKFYYSWKKTRS). The segment at 190-262 (SVMDRHARKQ…NRAKRKPPNG (73 aa)) is disordered. Positions 224-242 (EQPKEAKKEVPKNDTVPHI) are enriched in basic and acidic residues. A coiled-coil region spans residues 267-314 (QEDVEAVSANANAATTVLRQLDMELVSIKRQIQNIKQTNSAFKEKLQG). The SANT 2 domain occupies 327 to 378 (KFNARWTTEEQLLAVQAIRMYGRDFQAISDVIGNKSVVQVKNFFVNYRRRFN).

This sequence belongs to the CoREST family. In terms of assembly, component of a BHC histone deacetylase complex that contains KDM1A. Expressed in territories in which neurogenesis takes place.

It localises to the nucleus. Essential component of the BHC complex, a corepressor complex that represses transcription of neuron-specific genes in non-neuronal cells. The BHC complex is recruited at RE1/NRSE sites by REST and acts by deacetylating and demethylating specific sites on histones, thereby acting as a chromatin modifier. In the BHC complex, it serves as a molecular beacon for the recruitment of molecular machinery that imposes silencing across a chromosomal interval. Plays a central role in demethylation of Lys-4 of histone H3 by promoting demethylase activity of KDM1A on core histones and nucleosomal substrates. The chain is REST corepressor 1 (rcor1) from Xenopus laevis (African clawed frog).